The following is a 172-amino-acid chain: 3-hydroxydecanoyl-[acyl-carrier-protein] dehydratase (172 aa).

The active site involves His71.

Belongs to the thioester dehydratase family. FabA subfamily. Homodimer.

It localises to the cytoplasm. It catalyses the reaction a (3R)-hydroxyacyl-[ACP] = a (2E)-enoyl-[ACP] + H2O. The catalysed reaction is (3R)-hydroxydecanoyl-[ACP] = (2E)-decenoyl-[ACP] + H2O. The enzyme catalyses (2E)-decenoyl-[ACP] = (3Z)-decenoyl-[ACP]. It participates in lipid metabolism; fatty acid biosynthesis. Necessary for the introduction of cis unsaturation into fatty acids. Catalyzes the dehydration of (3R)-3-hydroxydecanoyl-ACP to E-(2)-decenoyl-ACP and then its isomerization to Z-(3)-decenoyl-ACP. Can catalyze the dehydratase reaction for beta-hydroxyacyl-ACPs with saturated chain lengths up to 16:0, being most active on intermediate chain length. The protein is 3-hydroxydecanoyl-[acyl-carrier-protein] dehydratase of Aliivibrio salmonicida (strain LFI1238) (Vibrio salmonicida (strain LFI1238)).